A 252-amino-acid chain; its full sequence is Large ribosomal subunit protein uL29m (252 aa).

At Lys146 the chain carries N6-acetyllysine. Over residues 230 to 240 (KKKEKILHAKF) the composition is skewed to basic residues. Positions 230-252 (KKKEKILHAKFPHLSQERKSSSV) are disordered.

This sequence belongs to the universal ribosomal protein uL29 family. In terms of assembly, component of the mitochondrial ribosome large subunit (39S) which comprises a 16S rRNA and about 50 distinct proteins.

Its subcellular location is the mitochondrion. In Mus musculus (Mouse), this protein is Large ribosomal subunit protein uL29m (Mrpl47).